A 228-amino-acid chain; its full sequence is Ribose-5-phosphate isomerase A (228 aa).

Residues 32 to 35 (TGST), 85 to 88 (DGAD), and 98 to 101 (KGGG) contribute to the substrate site. Glutamate 107 serves as the catalytic Proton acceptor. Lysine 125 lines the substrate pocket.

It belongs to the ribose 5-phosphate isomerase family. Homodimer.

It carries out the reaction aldehydo-D-ribose 5-phosphate = D-ribulose 5-phosphate. The protein operates within carbohydrate degradation; pentose phosphate pathway; D-ribose 5-phosphate from D-ribulose 5-phosphate (non-oxidative stage): step 1/1. Its function is as follows. Catalyzes the reversible conversion of ribose-5-phosphate to ribulose 5-phosphate. The polypeptide is Ribose-5-phosphate isomerase A (Cupriavidus taiwanensis (strain DSM 17343 / BCRC 17206 / CCUG 44338 / CIP 107171 / LMG 19424 / R1) (Ralstonia taiwanensis (strain LMG 19424))).